The chain runs to 357 residues: P2Y purinoceptor 8 (357 aa).

The Extracellular portion of the chain corresponds to 1–26 (MVKNGSHLDAETLAMLQNKAISITLP). N4 is a glycosylation site (N-linked (GlcNAc...) asparagine). The chain crosses the membrane as a helical span at residues 27–47 (VVYTMVAIISIPGNFFSLWVL). Residues 48–56 (CWHIKPKTP) lie on the Cytoplasmic side of the membrane. A helical transmembrane segment spans residues 57–77 (SVIFMINLSITDLLLACCFPF). The Extracellular portion of the chain corresponds to 78-97 (QIFYHIQRNHWIFGKTLCSL). A disulfide bond links C95 and C174. Residues 98–118 (VTVMFYSNMYSSILTMTCISI) traverse the membrane as a helical segment. The Cytoplasmic segment spans residues 119–137 (ERYMGVVYPMKLIKWRRKR). A helical membrane pass occupies residues 138-158 (YALGACVIMWIFLLLAFYPLE). Residues 159–185 (STDLTYEVKELGIITCFDVLKWEMLPN) lie on the Extracellular side of the membrane. A helical membrane pass occupies residues 186 to 206 (FAAWVAFLLTLFVVLFLIPFI). The Cytoplasmic portion of the chain corresponds to 207 to 236 (VTVGCYIGTIRKLIQTSSRYGNKQKTRSIY). The helical transmembrane segment at 237–257 (LAIIVLSVFITCFAPNNFILL) threads the bilayer. Residues 258-271 (AHMIVRLFYEGSLY) lie on the Extracellular side of the membrane. Residues 272–294 (PAYKLTLCLSCLNNCIDPFIYYF) traverse the membrane as a helical segment. Residues 295 to 357 (ASKEFYQKFM…ICLQRQESVF (63 aa)) are Cytoplasmic-facing.

Belongs to the G-protein coupled receptor 1 family.

Its subcellular location is the cell membrane. Its function is as follows. Probable receptor for purines coupled to G-proteins. This Gallus gallus (Chicken) protein is P2Y purinoceptor 8 (P2RY8).